Reading from the N-terminus, the 553-residue chain is Mucolipin-3 (553 aa).

The Cytoplasmic segment spans residues 1–62; it reads MADPEVVVSS…FWARGRKPWK (62 aa). The tract at residues 52–62 is interaction with phosphoinositides; the sequence is KFWARGRKPWK. Residues 63-83 form a helical membrane-spanning segment; that stretch reads LAIQILKIAMVTIQLVLFGLS. Over 84–283 the chain is Extracellular; it reads NQMVVAFKEE…VSGSIQKNTH (200 aa). The tract at residues 104–118 is extracellular/lumenal pore loop; the sequence is KGYMDRMDDTYAVYT. N138, N172, and N205 each carry an N-linked (GlcNAc...) asparagine glycan. Residues C159 and C185 are joined by a disulfide bond. Residues C238 and C269 are joined by a disulfide bond. The chain crosses the membrane as a helical span at residues 284-304; it reads YMMIFDAFVILTCLVSLILCI. Over 305–341 the chain is Cytoplasmic; sequence RSVIRGLQLQQEFVNFFLLHYKKEVSVSDQMEFVNGW. The helical transmembrane segment at 342 to 362 threads the bilayer; sequence YIMIIISDILTIIGSILKMEI. At 363 to 371 the chain is on the extracellular side; sequence QAKSLTSYD. Residues 372-392 form a helical membrane-spanning segment; the sequence is VCSILLGTSTMLVWLGVIRYL. The Cytoplasmic segment spans residues 393–414; sequence GFFAKYNLLILTLQAALPNVIR. Residues 415-435 traverse the membrane as a helical segment; it reads FCCCAAMIYLGYCFCGWIVLG. The Extracellular segment spans residues 436–443; that stretch reads PYHDKFRS. An intramembrane region (pore-forming) is located at residues 444-464; the sequence is LNMVSECLFSLINGDDMFATF. Positions 456–459 match the Selectivity filter motif; the sequence is NGDD. Over 465-475 the chain is Extracellular; the sequence is AKMQQKSYLVW. A helical membrane pass occupies residues 476 to 497; the sequence is LFSRIYLYSFISLFIYMILSLF. The Cytoplasmic segment spans residues 498–553; sequence IALITDTYETIKQYQQDGFPETELRTFISECKDLPNSGKYRLEDDPPVSLFCCCKK.

Belongs to the transient receptor (TC 1.A.4) family. Polycystin subfamily. MCOLN3 sub-subfamily. In terms of assembly, homotetramer. Can heterooligomerize with MCOLN1; heteromeric assemblies have different channel properties as compared to the respective homooligomers and may be tissue-specific. May heterooligomerize with TRPV5 to form a functional distinct ion channel. Interacts with GABARAPL2. In terms of processing, N-glycosylated.

Its subcellular location is the cell membrane. The protein resides in the early endosome membrane. It is found in the late endosome membrane. The protein localises to the lysosome membrane. It localises to the cytoplasmic vesicle. Its subcellular location is the autophagosome membrane. The enzyme catalyses Ca(2+)(in) = Ca(2+)(out). It carries out the reaction K(+)(in) = K(+)(out). The catalysed reaction is Na(+)(in) = Na(+)(out). Channel activity is activated by PtdIns(3,5)P2 (phosphatidylinositol 3,5-bisphosphate). Inhibited by lumenal H(+) and Na(+). The channel pore shows dynamic behavior and undergoes spontaneous, Ca(2+)-dependent modulation when conducting Ca(2+). Nonselective cation channel probably playing a role in the regulation of membrane trafficking events. Acts as a Ca(2+)-permeable cation channel with inwardly rectifying activity. Mediates release of Ca(2+) from endosomes to the cytoplasm, contributes to endosomal acidification and is involved in the regulation of membrane trafficking and fusion in the endosomal pathway. Also permeable to Mg(2+), Na(+) and K(+). Does not seem to act as mechanosensory transduction channel in inner ear sensory hair cells. Proposed to play a critical role at the cochlear stereocilia ankle-link region during hair-bundle growth. Involved in the regulation of autophagy. Through association with GABARAPL2 may be involved in autophagosome formation possibly providing Ca(2+) for the fusion process. Through a possible and probably tissue-specific heteromerization with MCOLN1 may be at least in part involved in many lysosome-dependent cellular events. Possible heteromeric ion channel assemblies with TRPV5 show pharmacological similarity with TRPML3. In Homo sapiens (Human), this protein is Mucolipin-3 (MCOLN3).